The sequence spans 277 residues: 4-diphosphocytidyl-2-C-methyl-D-erythritol kinase (277 aa).

The active site involves K9. P91 to S101 contributes to the ATP binding site. D133 is a catalytic residue.

This sequence belongs to the GHMP kinase family. IspE subfamily.

It carries out the reaction 4-CDP-2-C-methyl-D-erythritol + ATP = 4-CDP-2-C-methyl-D-erythritol 2-phosphate + ADP + H(+). The protein operates within isoprenoid biosynthesis; isopentenyl diphosphate biosynthesis via DXP pathway; isopentenyl diphosphate from 1-deoxy-D-xylulose 5-phosphate: step 3/6. Catalyzes the phosphorylation of the position 2 hydroxy group of 4-diphosphocytidyl-2C-methyl-D-erythritol. In Acinetobacter baumannii (strain AB307-0294), this protein is 4-diphosphocytidyl-2-C-methyl-D-erythritol kinase.